The following is a 180-amino-acid chain: Dual-action ribosomal maturation protein DarP (180 aa).

The protein belongs to the DarP family.

It is found in the cytoplasm. Functionally, member of a network of 50S ribosomal subunit biogenesis factors which assembles along the 30S-50S interface, preventing incorrect 23S rRNA structures from forming. Promotes peptidyl transferase center (PTC) maturation. This is Dual-action ribosomal maturation protein DarP from Pasteurella multocida (strain Pm70).